The following is a 314-amino-acid chain: 4-hydroxy-3-methylbut-2-enyl diphosphate reductase (314 aa).

Cysteine 12 serves as a coordination point for [4Fe-4S] cluster. Residues histidine 41 and histidine 74 each contribute to the (2E)-4-hydroxy-3-methylbut-2-enyl diphosphate site. Residues histidine 41 and histidine 74 each coordinate dimethylallyl diphosphate. The isopentenyl diphosphate site is built by histidine 41 and histidine 74. Residue cysteine 96 participates in [4Fe-4S] cluster binding. A (2E)-4-hydroxy-3-methylbut-2-enyl diphosphate-binding site is contributed by histidine 124. Histidine 124 contacts dimethylallyl diphosphate. Residue histidine 124 coordinates isopentenyl diphosphate. The active-site Proton donor is the glutamate 126. Threonine 167 lines the (2E)-4-hydroxy-3-methylbut-2-enyl diphosphate pocket. Cysteine 197 contacts [4Fe-4S] cluster. (2E)-4-hydroxy-3-methylbut-2-enyl diphosphate contacts are provided by serine 225, serine 226, asparagine 227, and serine 269. Dimethylallyl diphosphate contacts are provided by serine 225, serine 226, asparagine 227, and serine 269. Isopentenyl diphosphate contacts are provided by serine 225, serine 226, asparagine 227, and serine 269.

The protein belongs to the IspH family. The cofactor is [4Fe-4S] cluster.

The catalysed reaction is isopentenyl diphosphate + 2 oxidized [2Fe-2S]-[ferredoxin] + H2O = (2E)-4-hydroxy-3-methylbut-2-enyl diphosphate + 2 reduced [2Fe-2S]-[ferredoxin] + 2 H(+). It catalyses the reaction dimethylallyl diphosphate + 2 oxidized [2Fe-2S]-[ferredoxin] + H2O = (2E)-4-hydroxy-3-methylbut-2-enyl diphosphate + 2 reduced [2Fe-2S]-[ferredoxin] + 2 H(+). The protein operates within isoprenoid biosynthesis; dimethylallyl diphosphate biosynthesis; dimethylallyl diphosphate from (2E)-4-hydroxy-3-methylbutenyl diphosphate: step 1/1. It participates in isoprenoid biosynthesis; isopentenyl diphosphate biosynthesis via DXP pathway; isopentenyl diphosphate from 1-deoxy-D-xylulose 5-phosphate: step 6/6. In terms of biological role, catalyzes the conversion of 1-hydroxy-2-methyl-2-(E)-butenyl 4-diphosphate (HMBPP) into a mixture of isopentenyl diphosphate (IPP) and dimethylallyl diphosphate (DMAPP). Acts in the terminal step of the DOXP/MEP pathway for isoprenoid precursor biosynthesis. The chain is 4-hydroxy-3-methylbut-2-enyl diphosphate reductase from Aliivibrio salmonicida (strain LFI1238) (Vibrio salmonicida (strain LFI1238)).